A 624-amino-acid chain; its full sequence is Low affinity potassium transport system protein Kup (624 aa).

12 helical membrane passes run 9–29, 49–69, 103–123, 137–157, 165–185, 213–233, 247–267, 276–296, 337–357, 365–385, 398–418, and 421–441; these read LPAITLAAIGVVYGDIGTSPL, VFGFLSLIFWLLIFVVSIKYL, VIMGLIGGSFFYGEVVITPAI, PQLDTWIVPLSIIVLTLLFMI, VGKLFAPIMLTWFLILAGLGL, VSFIALGAVVLSITGVEALYA, WFTVVLPSLTLNYFGQGALLL, PFFLLAPDWALIPLLIIAALA, IYIPFVNWMLYVAVVIVIVIV, LAAAYGIAVTGTMVLTSILST, FVALILIAFLCVDIPLFTANL, and LLSGGWLPLSLGTVMFIVMTT.

Belongs to the HAK/KUP transporter (TC 2.A.72) family.

Its subcellular location is the cell inner membrane. The enzyme catalyses K(+)(in) + H(+)(in) = K(+)(out) + H(+)(out). In terms of biological role, responsible for the low-affinity transport of potassium into the cell. Likely operates as a K(+):H(+) symporter. This Shigella dysenteriae serotype 1 (strain Sd197) protein is Low affinity potassium transport system protein Kup.